Consider the following 388-residue polypeptide: MNLHEYQAKQLFARYGLPAPTGYACTTPREAEEAASKIGSGPWVVKCQVHAGGRGKAGGVKVVSNKEDIRAFAENWLGKKLVTYQTDAQGQPVHQILVEAATDIDKELYLGAVVDRGTRRVVFMASTEGGVEIEKVAEETPELIHKAAIDPLVGPQPYQGRELAFKLGLSGKQVAQFTKIFMGLATLFLERDLALVEINPLVITKQGDLICLDGKLGADGNALFRQPELREMRDPSQEDSREAHAAQWELNYVALDGNIGCMVNGAGLAMGTMDIVKLHGGSPANFLDVGGGATKERVTEAFKIILSDDKVKAVFVNIFGGIVRCDLIADGIIGAVAEVGVSVPVVVRLEGNNAELGAKKLADSGLNIIAATSLTGAAQQVVAAAGDK.

Residues 9–244 enclose the ATP-grasp domain; sequence KQLFARYGLP…PSQEDSREAH (236 aa). Residues Lys46, 53–55, Glu99, Thr102, and Glu107 contribute to the ATP site; that span reads GRG. Mg(2+)-binding residues include Asn199 and Asp213. Residues Asn264 and 321 to 323 each bind substrate; that span reads GIV.

It belongs to the succinate/malate CoA ligase beta subunit family. Heterotetramer of two alpha and two beta subunits. Requires Mg(2+) as cofactor.

The catalysed reaction is succinate + ATP + CoA = succinyl-CoA + ADP + phosphate. It carries out the reaction GTP + succinate + CoA = succinyl-CoA + GDP + phosphate. Its pathway is carbohydrate metabolism; tricarboxylic acid cycle; succinate from succinyl-CoA (ligase route): step 1/1. Its function is as follows. Succinyl-CoA synthetase functions in the citric acid cycle (TCA), coupling the hydrolysis of succinyl-CoA to the synthesis of either ATP or GTP and thus represents the only step of substrate-level phosphorylation in the TCA. The beta subunit provides nucleotide specificity of the enzyme and binds the substrate succinate, while the binding sites for coenzyme A and phosphate are found in the alpha subunit. This is Succinate--CoA ligase [ADP-forming] subunit beta from Pectobacterium atrosepticum (strain SCRI 1043 / ATCC BAA-672) (Erwinia carotovora subsp. atroseptica).